Consider the following 151-residue polypeptide: Transcriptional regulator MraZ (151 aa).

2 SpoVT-AbrB domains span residues 5-52 (ANAI…PLPE) and 81-124 (AVDL…DEDA).

This sequence belongs to the MraZ family. In terms of assembly, forms oligomers.

Its subcellular location is the cytoplasm. It is found in the nucleoid. This chain is Transcriptional regulator MraZ, found in Pseudomonas aeruginosa (strain LESB58).